Reading from the N-terminus, the 252-residue chain is Methionine aminopeptidase (252 aa).

H76 serves as a coordination point for substrate. A divalent metal cation is bound by residues D93, D104, and H168. H175 serves as a coordination point for substrate. The a divalent metal cation site is built by E202 and E233.

This sequence belongs to the peptidase M24A family. Methionine aminopeptidase type 1 subfamily. In terms of assembly, monomer. The cofactor is Co(2+). Requires Zn(2+) as cofactor. Mn(2+) is required as a cofactor. It depends on Fe(2+) as a cofactor.

It catalyses the reaction Release of N-terminal amino acids, preferentially methionine, from peptides and arylamides.. In terms of biological role, removes the N-terminal methionine from nascent proteins. The N-terminal methionine is often cleaved when the second residue in the primary sequence is small and uncharged (Met-Ala-, Cys, Gly, Pro, Ser, Thr, or Val). Requires deformylation of the N(alpha)-formylated initiator methionine before it can be hydrolyzed. The polypeptide is Methionine aminopeptidase (Staphylococcus aureus (strain MRSA252)).